The primary structure comprises 315 residues: Ester hydrolase C11orf54 (315 aa).

Zn(2+) is bound by residues His-266, His-268, and His-278.

In terms of assembly, monomer. Requires Zn(2+) as cofactor.

It is found in the nucleus. Its subcellular location is the cytoplasm. Functionally, exhibits ester hydrolase activity on the substrate p-nitrophenyl acetate, in vitro. Regulates DNA damage and repair by regulating HIF1A degradation via chaperone-mediated autophagy (CMA). In terms of biological role, probably non-functional. The sequence is that of Ester hydrolase C11orf54 (C11orf54) from Homo sapiens (Human).